Here is a 156-residue protein sequence, read N- to C-terminus: MDITLTIFAQALAFAGLIWIVATKIWPPLLQAIEERQQKIAEGLAAADRSQKDLAQAQEKVNEALKDARTKANEIIDQAHARANQIIEAAKLEAIAEANRQKDLAQTEIDASATRAREELRKQVSVLAVSGAEKLLKREIDANAHKALLDELAAEI.

A helical transmembrane segment spans residues 3–23 (ITLTIFAQALAFAGLIWIVAT).

This sequence belongs to the ATPase B chain family. As to quaternary structure, F-type ATPases have 2 components, F(1) - the catalytic core - and F(0) - the membrane proton channel. F(1) has five subunits: alpha(3), beta(3), gamma(1), delta(1), epsilon(1). F(0) has three main subunits: a(1), b(2) and c(10-14). The alpha and beta chains form an alternating ring which encloses part of the gamma chain. F(1) is attached to F(0) by a central stalk formed by the gamma and epsilon chains, while a peripheral stalk is formed by the delta and b chains.

The protein resides in the cell inner membrane. In terms of biological role, f(1)F(0) ATP synthase produces ATP from ADP in the presence of a proton or sodium gradient. F-type ATPases consist of two structural domains, F(1) containing the extramembraneous catalytic core and F(0) containing the membrane proton channel, linked together by a central stalk and a peripheral stalk. During catalysis, ATP synthesis in the catalytic domain of F(1) is coupled via a rotary mechanism of the central stalk subunits to proton translocation. Its function is as follows. Component of the F(0) channel, it forms part of the peripheral stalk, linking F(1) to F(0). The protein is ATP synthase subunit b of Xanthomonas axonopodis pv. citri (strain 306).